Reading from the N-terminus, the 217-residue chain is Nucleolar protein 12 (217 aa).

A coiled-coil region spans residues 34 to 98 (GFHKRKVERK…LVTAKTESVQ (65 aa)). Positions 122-217 (LGLPLPEQGD…MTGKARHNGE (96 aa)) are disordered. Positions 130–141 (GDQDGSQEEEMS) are enriched in acidic residues. Composition is skewed to basic residues over residues 172 to 184 (AHSRKKVKRKHPR) and 201 to 217 (KTQRRRRMTGKARHNGE).

The protein belongs to the RRP17 family. Interacts with KIAA1191. In terms of tissue distribution, expressed in brain, lung, spleen, kidney and heart.

The protein localises to the nucleus. Its subcellular location is the nucleolus. It localises to the cytoplasm. Its function is as follows. Multifunctional RNA binding protein that plays a role in RNA metabolism and DNA maintenance. Participates in the resolution of DNA stress and the maintenance of genome integrity by localizing to sites of DNA insults. Also plays a role in proper nucleolar organization by limiting nucleolar size and regulating nucleolar number. Mechanistically, regulates the nucleolar levels of fibrillarin and nucleolin, two key players in pre-rRNA processing and ribosome assembly. The polypeptide is Nucleolar protein 12 (Nol12) (Mus musculus (Mouse)).